The sequence spans 377 residues: Polar flagellin F (377 aa).

Coiled-coil stretches lie at residues 98-131 (QSANGSNSQVERTALQEEVTALNDELNRIAETTS) and 302-339 (DSQRAELGAYQNRFNHAINNLDNIHENLAASNSRIQDT).

This sequence belongs to the bacterial flagellin family. In terms of assembly, heteromer of multiple flagellin subunits including FlaA, FlaB/D, FlaC, FlaE and FlaF.

It is found in the secreted. Its subcellular location is the bacterial flagellum. Functionally, flagellin is the subunit protein which polymerizes to form the filaments of bacterial flagella. This is Polar flagellin F (flaF) from Vibrio parahaemolyticus serotype O3:K6 (strain RIMD 2210633).